A 970-amino-acid chain; its full sequence is MLQQVNGHNPGSDGQAREYLREDLQEFLGGEVLLYKLDDLTRVNPVTLETVLRCLQARYMADTFYTNAGCTLVALNPFKPVPQLYSPELMREYHAAPQPQKLKPHVFTVGEQTYRNVKSLIEPVNQSIVVSGESGAGKTWTSRCLMKFYAVVATSPASWESHKIAERIEQRILNSNPVMEAFGNACTLRNNNSSRFGKFIQLQLNRAQQMTGAAVQTYLLEKTRVACQASSERNFHIFYQICKGASEDERLQWHLPEGAAFSWLPNPERSLEEDCFEVTREAMLHLGIDTPTQNNIFKVLAGLLHLGNIQFAASEDEAQPCQPMDDAKYSVRTAASLLGLPEDVLLEMVQIRTIRAGRQQQVFRKPCARAECDTRRDCLAKLIYARLFDWLVSVINSSICADTDSWTTFIGLLDVYGFESFPDNSLEQLCINYANEKLQQHFVAHYLRAQQEEYAVEGLEWSFINYQDNQPCLDLIEGSPISICSLINEECRLNRPSSAAQLQTRIETALAGSPCLGHNKLSREPSFIVVHYAGPVRYHTAGLVEKNKDPIPPELTRLLQQSQDPLLMGLFPTNPKEKTQEEPPGQSRAPVLTVVSKFKASLEQLLQVLHSTTPHYIRCIKPNSQGQAQTFLQEEVLSQLEACGLVETIHISAAGFPIRVSHRNFVERYKLLRRLHPCTSSGPDSPYPAKGLPEWCPHSEEATLEPLIQDILHTLPVLTQAAAITGDSAEAMPAPMHCGRTKVFMTDSMLELLECGRARVLEQCARCIQGGWRRHRHREQERQWRAVMLIQAAIRSWLTRKHIQRLHAAATVIKRAWQKWRIRMACLAAKELDGVEEKHFSQAPCSLSTSPLQTRLLEAIIRLWPLGLVLANTAMGVGSFQRKLVVWACLQLPRGSPSSYTVQTAQDQAGVTSIRALPQGSIKFHCRKSPLRYADICPEPSPYSITGFNQILLERHRLIHVTSSAFTGLG.

Residues 35–758 (YKLDDLTRVN…MLELLECGRA (724 aa)) enclose the Myosin motor domain. 132–139 (GESGAGKT) is a binding site for ATP. Residues 602-624 (LEQLLQVLHSTTPHYIRCIKPNS) are actin-binding. Serine 685 carries the post-translational modification Phosphoserine. 2 IQ domains span residues 759 to 779 (RVLE…RHRE) and 783 to 812 (QWRA…AATV). The interval 824-970 (MACLAAKELD…VTSSAFTGLG (147 aa)) is myMOMA region.

The protein belongs to the TRAFAC class myosin-kinesin ATPase superfamily. Myosin family. As to quaternary structure, myosin is a hexamer of 2 heavy chains and 4 light chains: interacts with myosin light chains MYL9 and MYL12B. In terms of tissue distribution, widely expressed in multiple tissues and cell lines.

The protein localises to the mitochondrion outer membrane. It localises to the cytoplasm. It is found in the cytoskeleton. Functionally, actin-based motor molecule with ATPase activity that localizes to the mitochondrion outer membrane. Motor protein that moves towards the plus-end of actin filaments. Required for mitochondrial inheritance during mitosis. May be involved in mitochondrial transport or positioning. The sequence is that of Unconventional myosin-XIX from Homo sapiens (Human).